Here is a 453-residue protein sequence, read N- to C-terminus: tRNA modification GTPase MnmE (453 aa).

3 residues coordinate (6S)-5-formyl-5,6,7,8-tetrahydrofolate: Arg-28, Glu-86, and Lys-125. The region spanning 221–375 is the TrmE-type G domain; it reads GIKIAIVGEP…LIKYLEETSL (155 aa). Asn-231 serves as a coordination point for K(+). GTP is bound by residues 231–236, 250–256, and 276–279; these read NAGKSS, TNIPGTT, and DTAG. Ser-235 is a Mg(2+) binding site. Thr-250, Ile-252, and Thr-255 together coordinate K(+). Residue Thr-256 participates in Mg(2+) binding. Residue Lys-453 coordinates (6S)-5-formyl-5,6,7,8-tetrahydrofolate.

It belongs to the TRAFAC class TrmE-Era-EngA-EngB-Septin-like GTPase superfamily. TrmE GTPase family. As to quaternary structure, homodimer. Heterotetramer of two MnmE and two MnmG subunits. Requires K(+) as cofactor.

The protein resides in the cytoplasm. Functionally, exhibits a very high intrinsic GTPase hydrolysis rate. Involved in the addition of a carboxymethylaminomethyl (cmnm) group at the wobble position (U34) of certain tRNAs, forming tRNA-cmnm(5)s(2)U34. In Mycoplasmoides gallisepticum (strain R(low / passage 15 / clone 2)) (Mycoplasma gallisepticum), this protein is tRNA modification GTPase MnmE.